Reading from the N-terminus, the 101-residue chain is Putative pterin-4-alpha-carbinolamine dehydratase (101 aa).

It belongs to the pterin-4-alpha-carbinolamine dehydratase family.

It catalyses the reaction (4aS,6R)-4a-hydroxy-L-erythro-5,6,7,8-tetrahydrobiopterin = (6R)-L-erythro-6,7-dihydrobiopterin + H2O. The chain is Putative pterin-4-alpha-carbinolamine dehydratase from Rhizobium johnstonii (strain DSM 114642 / LMG 32736 / 3841) (Rhizobium leguminosarum bv. viciae).